The following is a 315-amino-acid chain: tRNA pseudouridine synthase B (315 aa).

Histidine 42 is a binding site for substrate. Aspartate 47 serves as the catalytic Nucleophile. Substrate-binding residues include tyrosine 75, tyrosine 178, and leucine 199.

It belongs to the pseudouridine synthase TruB family. Type 1 subfamily.

It carries out the reaction uridine(55) in tRNA = pseudouridine(55) in tRNA. Responsible for synthesis of pseudouridine from uracil-55 in the psi GC loop of transfer RNAs. The chain is tRNA pseudouridine synthase B from Photorhabdus laumondii subsp. laumondii (strain DSM 15139 / CIP 105565 / TT01) (Photorhabdus luminescens subsp. laumondii).